The sequence spans 238 residues: Probable transcriptional regulatory protein SUB0364 (238 aa).

This sequence belongs to the TACO1 family. YeeN subfamily.

It is found in the cytoplasm. The sequence is that of Probable transcriptional regulatory protein SUB0364 from Streptococcus uberis (strain ATCC BAA-854 / 0140J).